The sequence spans 454 residues: Gastrin/cholecystokinin type B receptor (454 aa).

Over 1–57 (MELLKPNRSVLGSGPGPGASLCRSGGPLLNGSGTGNLSCEPPRIRGAGTRELELAIR) the chain is Extracellular. Asparagine 7, asparagine 30, and asparagine 36 each carry an N-linked (GlcNAc...) asparagine glycan. Residues 58–79 (VTLYAVIFLMSVGGNVLIIVVL) form a helical membrane-spanning segment. The Cytoplasmic portion of the chain corresponds to 80-87 (GLSRRLRT). The helical transmembrane segment at 88-109 (VTNAFLLSLAVSDLLLAVACMP) threads the bilayer. Over 110 to 131 (FTLLPNLMGTFIFGTVVCKAVS) the chain is Extracellular. Cysteine 127 and cysteine 205 are disulfide-bonded. The chain crosses the membrane as a helical span at residues 132–150 (YFMGVSVSVSTLSLVAIAL). Residues 151 to 170 (ERYSAICRPLQARVWQTRSH) are Cytoplasmic-facing. A helical membrane pass occupies residues 171–189 (AARVIVATWMLSGLLMVPY). Residues 190–219 (PVYTAVQPAGPRVLQCMHRWPSARVRQTWS) are Extracellular-facing. Residues 220–242 (VLLLLLLFFVPGVVMAVAYGLIS) form a helical membrane-spanning segment. Topologically, residues 243-340 (RELYLGLRFD…KLLAKKRVVR (98 aa)) are cytoplasmic. Residues 257–284 (SESQSRVGSQGGLPGGTGQGPAQANGRC) are disordered. Residues 265 to 275 (SQGGLPGGTGQ) show a composition bias toward gly residues. Residues 341–362 (MLLVIVVLFFLCWLPVYSANTW) traverse the membrane as a helical segment. Topologically, residues 363-380 (RAFDGPGAHRALSGAPIS) are extracellular. A helical transmembrane segment spans residues 381 to 401 (FIHLLTYASACVNPLVYCFMH). Residues 402–454 (RRFRQACLDTCTRCCPRPPRARPRPLPDEDPPTPSIASLSRLSYTTISTLGPG) are Cytoplasmic-facing. The S-palmitoyl cysteine moiety is linked to residue cysteine 415. A disordered region spans residues 422 to 441 (ARPRPLPDEDPPTPSIASLS).

Belongs to the G-protein coupled receptor 1 family.

It is found in the cell membrane. Its function is as follows. Receptor for gastrin and cholecystokinin. The CCK-B receptors occur throughout the central nervous system where they modulate anxiety, analgesia, arousal, and neuroleptic activity. This receptor mediates its action by association with G proteins that activate a phosphatidylinositol-calcium second messenger system. The protein is Gastrin/cholecystokinin type B receptor (CCKBR) of Bos taurus (Bovine).